A 232-amino-acid polypeptide reads, in one-letter code: Ubiquinone biosynthesis O-methyltransferase (232 aa).

S-adenosyl-L-methionine is bound by residues arginine 36, glycine 55, aspartate 76, and methionine 120.

Belongs to the methyltransferase superfamily. UbiG/COQ3 family.

The catalysed reaction is a 3-demethylubiquinol + S-adenosyl-L-methionine = a ubiquinol + S-adenosyl-L-homocysteine + H(+). It carries out the reaction a 3-(all-trans-polyprenyl)benzene-1,2-diol + S-adenosyl-L-methionine = a 2-methoxy-6-(all-trans-polyprenyl)phenol + S-adenosyl-L-homocysteine + H(+). The protein operates within cofactor biosynthesis; ubiquinone biosynthesis. O-methyltransferase that catalyzes the 2 O-methylation steps in the ubiquinone biosynthetic pathway. This chain is Ubiquinone biosynthesis O-methyltransferase, found in Burkholderia thailandensis (strain ATCC 700388 / DSM 13276 / CCUG 48851 / CIP 106301 / E264).